Consider the following 469-residue polypeptide: Glutamine synthetase (469 aa).

The 86-residue stretch at asparagine 14–glycine 99 folds into the GS beta-grasp domain. The 364-residue stretch at arginine 106–alanine 469 folds into the GS catalytic domain. Mg(2+) contacts are provided by glutamate 131 and glutamate 133. Glutamate 209 is a binding site for ATP. The Mg(2+) site is built by glutamate 214 and aspartate 221. L-glutamate is bound by residues asparagine 265–glycine 266 and glycine 266. Position 270 (histidine 270) interacts with Mg(2+). ATP-binding positions include histidine 272 to serine 274 and serine 274. The L-glutamate site is built by arginine 322, glutamate 328, and arginine 340. The ATP site is built by arginine 340, arginine 345, and lysine 353. Glutamate 358 contributes to the Mg(2+) binding site. Residue arginine 360 participates in L-glutamate binding. Tyrosine 398 is modified (O-AMP-tyrosine).

It belongs to the glutamine synthetase family. As to quaternary structure, oligomer of 12 subunits arranged in the form of two hexameric ring. Mg(2+) is required as a cofactor.

The protein resides in the cytoplasm. The enzyme catalyses L-glutamate + NH4(+) + ATP = L-glutamine + ADP + phosphate + H(+). Its activity is regulated as follows. The activity of this enzyme could be controlled by adenylation under conditions of abundant glutamine. Its function is as follows. Catalyzes the ATP-dependent biosynthesis of glutamine from glutamate and ammonia. The chain is Glutamine synthetase from Rhizobium leguminosarum bv. viciae.